A 501-amino-acid chain; its full sequence is Lysine--tRNA ligase (501 aa).

Mg(2+)-binding residues include Glu411 and Glu418.

The protein belongs to the class-II aminoacyl-tRNA synthetase family. As to quaternary structure, homodimer. Mg(2+) serves as cofactor.

The protein resides in the cytoplasm. It catalyses the reaction tRNA(Lys) + L-lysine + ATP = L-lysyl-tRNA(Lys) + AMP + diphosphate. This is Lysine--tRNA ligase from Aliivibrio fischeri (strain ATCC 700601 / ES114) (Vibrio fischeri).